Consider the following 554-residue polypeptide: Glucose-6-phosphate isomerase (554 aa).

The active-site Proton donor is the E359. Active-site residues include H390 and K518.

The protein belongs to the GPI family.

It is found in the cytoplasm. The catalysed reaction is alpha-D-glucose 6-phosphate = beta-D-fructose 6-phosphate. It functions in the pathway carbohydrate biosynthesis; gluconeogenesis. Its pathway is carbohydrate degradation; glycolysis; D-glyceraldehyde 3-phosphate and glycerone phosphate from D-glucose: step 2/4. Its function is as follows. Catalyzes the reversible isomerization of glucose-6-phosphate to fructose-6-phosphate. The sequence is that of Glucose-6-phosphate isomerase from Pseudomonas syringae pv. syringae (strain B728a).